Reading from the N-terminus, the 230-residue chain is 5'-methylthioadenosine/S-adenosylhomocysteine nucleosidase (230 aa).

Glutamate 12 acts as the Proton acceptor in catalysis. Substrate is bound by residues glycine 78, isoleucine 153, and methionine 174–glutamate 175. Residue aspartate 198 is the Proton donor of the active site.

The protein belongs to the PNP/UDP phosphorylase family. MtnN subfamily.

The catalysed reaction is S-adenosyl-L-homocysteine + H2O = S-(5-deoxy-D-ribos-5-yl)-L-homocysteine + adenine. It carries out the reaction S-methyl-5'-thioadenosine + H2O = 5-(methylsulfanyl)-D-ribose + adenine. The enzyme catalyses 5'-deoxyadenosine + H2O = 5-deoxy-D-ribose + adenine. It functions in the pathway amino-acid biosynthesis; L-methionine biosynthesis via salvage pathway; S-methyl-5-thio-alpha-D-ribose 1-phosphate from S-methyl-5'-thioadenosine (hydrolase route): step 1/2. Its function is as follows. Catalyzes the irreversible cleavage of the glycosidic bond in both 5'-methylthioadenosine (MTA) and S-adenosylhomocysteine (SAH/AdoHcy) to adenine and the corresponding thioribose, 5'-methylthioribose and S-ribosylhomocysteine, respectively. Also cleaves 5'-deoxyadenosine, a toxic by-product of radical S-adenosylmethionine (SAM) enzymes, into 5-deoxyribose and adenine. This chain is 5'-methylthioadenosine/S-adenosylhomocysteine nucleosidase, found in Shewanella denitrificans (strain OS217 / ATCC BAA-1090 / DSM 15013).